Consider the following 639-residue polypeptide: RNA polymerase II elongation factor ELL2 (639 aa).

Disordered regions lie at residues 175 to 203 (DTVPERKRSTPMNPANTIRKMHSGNSVSQ), 291 to 326 (LNPSQNASTSRSESPLCSSKDAASSPQKRPLDSDFI), 378 to 416 (PSTHLPVSNPPQTVNSNSNSPSTPEGLGTQDLPVDSFSQ), and 439 to 513 (PSSA…EGCT). The segment covering 291 to 317 (LNPSQNASTSRSESPLCSSKDAASSPQ) has biased composition (polar residues). Low complexity predominate over residues 378 to 401 (PSTHLPVSNPPQTVNSNSNSPSTP). Positions 457–469 (SHKKSKKKSKKHK) are enriched in basic residues. The segment covering 470–479 (EKDQIKKLDI) has biased composition (basic and acidic residues). The segment covering 480–490 (ETMEEKEEDLQ) has biased composition (acidic residues). Phosphoserine is present on residues Ser-501 and Ser-579. The region spanning 525 to 635 (PDYLIKYIAI…LIGEFDQQQA (111 aa)) is the OCEL domain.

It belongs to the ELL/occludin family. As to quaternary structure, component of the super elongation complex (SEC), at least composed of EAF1, EAF2, CDK9, MLLT3/AF9, AFF (AFF1 or AFF4), the P-TEFb complex and ELL (ELL, ELL2 or ELL3). Component of the little elongation complex (LEC), at least composed of ELL (ELL, ELL2 or ELL3), ZC3H8, ICE1 and ICE2. Interacts with AFF4; the interaction is direct and leads to stabilize ELL2 and prevent ELL2 ubiquitination. Interacts with EAF1 and EAF2. Ubiquitinated by SIAH1, leading to its degradation by the proteasome. Interaction with AFF4 stabilizes ELL2 and prevents ELL2 ubiquitination.

The protein localises to the nucleus. Functionally, elongation factor component of the super elongation complex (SEC), a complex required to increase the catalytic rate of RNA polymerase II transcription by suppressing transient pausing by the polymerase at multiple sites along the DNA. Component of the little elongation complex (LEC), a complex required to regulate small nuclear RNA (snRNA) gene transcription by RNA polymerase II and III. Plays a role in immunoglobulin secretion in plasma cells: directs efficient alternative mRNA processing, influencing both proximal poly(A) site choice and exon skipping, as well as immunoglobulin heavy chain (IgH) alternative processing. Probably acts by regulating histone modifications accompanying transition from membrane-specific to secretory IgH mRNA expression. This chain is RNA polymerase II elongation factor ELL2 (Ell2), found in Mus musculus (Mouse).